Consider the following 309-residue polypeptide: NAD kinase (309 aa).

Catalysis depends on aspartate 89, which acts as the Proton acceptor. Residues 89 to 90, 163 to 164, histidine 174, arginine 191, aspartate 193, and 204 to 209 each bind NAD(+); these read DG, NE, and TAYALS.

Belongs to the NAD kinase family. Requires a divalent metal cation as cofactor.

It is found in the cytoplasm. It carries out the reaction NAD(+) + ATP = ADP + NADP(+) + H(+). Its function is as follows. Involved in the regulation of the intracellular balance of NAD and NADP, and is a key enzyme in the biosynthesis of NADP. Catalyzes specifically the phosphorylation on 2'-hydroxyl of the adenosine moiety of NAD to yield NADP. In Shewanella sp. (strain MR-4), this protein is NAD kinase.